We begin with the raw amino-acid sequence, 876 residues long: ATP-dependent helicase Lhr-Core (876 aa).

Positions 37, 60, 61, 175, 176, 374, and 377 each coordinate ATP. One can recognise a Helicase ATP-binding domain in the interval 41–232; sequence IPLIKKGKNV…FLVGGNGDYE (192 aa). The DEAH box signature appears at 175–178; sequence DEIH. The 173-residue stretch at 249 to 421 folds into the Helicase C-terminal domain; the sequence is PVKDLVHATE…NIHVPENPLD (173 aa). Positions 422–506 are WH domain; it reads VLTQLIVAAS…IFFLNSGTIP (85 aa). The segment at 507–876 is domain 4; it reads DEAMIPVKME…DLEYTEAGIK (370 aa).

This sequence belongs to the Lhr helicase family. Lhr-Core subfamily. As to quaternary structure, monomer.

The catalysed reaction is Couples ATP hydrolysis with the unwinding of duplex DNA by translocating in the 3'-5' direction.. The enzyme catalyses ATP + H2O = ADP + phosphate + H(+). Probably part of a 4-gene DNA damage response locus in which the upstream ups system, in combination with this downstream locus, functions in homologous recombination to rescue Sulfolobales from DNA-damaging threats. DNA helicase that translocates in a 3'-5' direction on single-stranded (ss)DNA. Binds Holliday junction (HJ) DNA, Y-shaped DNA, DNA with a 3'-overhang and single-stranded (ss)DNA with high affinity; binds double-stranded (ds)DNA with less affinity. Has helicase activity on DNA with a 3'-overhang, Y-shaped DNA and HJ DNA. Does not unwind blunt-ended dsDNA or DNA with a 5'-overhang. This Sulfolobus acidocaldarius (strain ATCC 33909 / DSM 639 / JCM 8929 / NBRC 15157 / NCIMB 11770) protein is ATP-dependent helicase Lhr-Core.